The sequence spans 274 residues: Ribosomal RNA small subunit methyltransferase A (274 aa).

S-adenosyl-L-methionine is bound by residues His15, Leu17, Gly42, Glu64, Asp89, and Asn108.

It belongs to the class I-like SAM-binding methyltransferase superfamily. rRNA adenine N(6)-methyltransferase family. RsmA subfamily.

It is found in the cytoplasm. The catalysed reaction is adenosine(1518)/adenosine(1519) in 16S rRNA + 4 S-adenosyl-L-methionine = N(6)-dimethyladenosine(1518)/N(6)-dimethyladenosine(1519) in 16S rRNA + 4 S-adenosyl-L-homocysteine + 4 H(+). Its function is as follows. Specifically dimethylates two adjacent adenosines (A1518 and A1519) in the loop of a conserved hairpin near the 3'-end of 16S rRNA in the 30S particle. May play a critical role in biogenesis of 30S subunits. This chain is Ribosomal RNA small subunit methyltransferase A, found in Prochlorococcus marinus (strain AS9601).